Here is a 601-residue protein sequence, read N- to C-terminus: Glutathione-regulated potassium-efflux system protein KefB (601 aa).

Helical transmembrane passes span 4–24 (ADLL…VPLA), 29–49 (IGAV…GLGF), 55–75 (EILH…GLEL), 87–107 (IFGV…GLLM), 111–131 (FLWQ…TAMA), 152–172 (VLLF…LLAG), 177–197 (HFDW…LIGG), 207–227 (FIAA…LVLS), 230–250 (LFMD…GVLL), 262–282 (AIDP…GMSL), 284–304 (LGVL…LVVI), 324–344 (MQFA…FSTA), and 356–376 (ALLL…MKGI). The region spanning 400–519 (KPQVVVVGFG…AGVTQFSRET (120 aa)) is the RCK N-terminal domain.

The protein belongs to the monovalent cation:proton antiporter 2 (CPA2) transporter (TC 2.A.37) family. KefB subfamily. Interacts with the regulatory subunit KefG.

It localises to the cell inner membrane. In terms of biological role, pore-forming subunit of a potassium efflux system that confers protection against electrophiles. Catalyzes K(+)/H(+) antiport. The sequence is that of Glutathione-regulated potassium-efflux system protein KefB from Salmonella typhi.